The following is a 177-amino-acid chain: Probable chemoreceptor glutamine deamidase CheD (177 aa).

It belongs to the CheD family.

It catalyses the reaction L-glutaminyl-[protein] + H2O = L-glutamyl-[protein] + NH4(+). In terms of biological role, probably deamidates glutamine residues to glutamate on methyl-accepting chemotaxis receptors (MCPs), playing an important role in chemotaxis. This chain is Probable chemoreceptor glutamine deamidase CheD, found in Pseudomonas fluorescens (strain SBW25).